We begin with the raw amino-acid sequence, 187 residues long: Peptide deformylase (187 aa).

Residues Cys114 and His157 each contribute to the Fe cation site. The active site involves Glu158. Position 161 (His161) interacts with Fe cation.

The protein belongs to the polypeptide deformylase family. Fe(2+) serves as cofactor.

It catalyses the reaction N-terminal N-formyl-L-methionyl-[peptide] + H2O = N-terminal L-methionyl-[peptide] + formate. Functionally, removes the formyl group from the N-terminal Met of newly synthesized proteins. Requires at least a dipeptide for an efficient rate of reaction. N-terminal L-methionine is a prerequisite for activity but the enzyme has broad specificity at other positions. This chain is Peptide deformylase, found in Enterococcus faecalis (strain ATCC 700802 / V583).